A 519-amino-acid polypeptide reads, in one-letter code: Importin subunit alpha-9 (519 aa).

The segment at 1–29 (MADDGSASNRRDPIKSSVGNVAGQRRRKQ) is disordered. 8 ARM repeats span residues 116–156 (FPPV…NIAA), 158–197 (KPEE…NVAG), 200–239 (EDLR…NLIK), 244–283 (KAAA…YLSA), 286–326 (DIAT…NFVA), 335–374 (ILIR…NIAA), 377–416 (IEHK…NLCV), and 429–468 (QEHL…LVLR).

The protein belongs to the importin alpha family. Forms a complex with importin subunit beta-1.

It is found in the nucleus envelope. Its function is as follows. Binds to conventional NLS motifs and mediates nuclear protein import across the nuclear envelope. Acts as a cellular receptor for the nuclear import of the virD2 protein of Agrobacterium, but is not essential for Agrobacterium-mediated root transformation. This is Importin subunit alpha-9 from Arabidopsis thaliana (Mouse-ear cress).